Here is a 322-residue protein sequence, read N- to C-terminus: Corticotropin-releasing factor-binding protein (322 aa).

The N-terminal stretch at 1 to 24 is a signal peptide; the sequence is MSPNFKLQCHFILIFLTALRGESR. 5 cysteine pairs are disulfide-bonded: Cys60-Cys81, Cys104-Cys141, Cys183-Cys205, Cys237-Cys264, and Cys277-Cys318. Asn204 carries an N-linked (GlcNAc...) asparagine glycan.

It belongs to the CRF-binding protein family.

The protein localises to the secreted. In terms of biological role, binds CRF and inactivates it. May prevent inappropriate pituitary-adrenal stimulation in pregnancy. The polypeptide is Corticotropin-releasing factor-binding protein (CRHBP) (Homo sapiens (Human)).